The chain runs to 643 residues: Alpha-dioxygenase 1 (643 aa).

Residue histidine 167 is the Proton acceptor of the active site. Aspartate 168 provides a ligand contact to Ca(2+). Histidine 172 is a heme b binding site. Threonine 220, tryptophan 222, aspartate 224, and serine 226 together coordinate Ca(2+). 3 residues coordinate heme b: histidine 392, arginine 489, and arginine 493.

The protein belongs to the peroxidase family. The cofactor is heme b. Ca(2+) is required as a cofactor.

Its function is as follows. Alpha-dioxygenase that catalyzes the primary oxygenation step of a variety of 14-20 carbon fatty acids, containing up to three unsaturated bonds, into their corresponding 2R-hydroperoxides. Involved in the production of oxylipins that function in cell signaling, wound healing, and protection from infection. The lipid-derived signaling pathway is involved in the initial response of hot pepper plants to pathogen infection. In Capsicum annuum (Capsicum pepper), this protein is Alpha-dioxygenase 1.